The primary structure comprises 429 residues: Adenylosuccinate synthetase (429 aa).

GTP-binding positions include 12 to 18 (GDEGKGK) and 40 to 42 (GHT). The active-site Proton acceptor is the Asp13. The Mg(2+) site is built by Asp13 and Gly40. Residues 13 to 16 (DEGK), 38 to 41 (NAGH), Thr128, Arg142, Gln223, and Arg302 contribute to the IMP site. His41 serves as the catalytic Proton donor. Residue 298–304 (TVTGRPR) participates in substrate binding. GTP is bound by residues Arg304, 330–332 (LLD), and 412–414 (SVG).

Belongs to the adenylosuccinate synthetase family. As to quaternary structure, homodimer. It depends on Mg(2+) as a cofactor.

It localises to the cytoplasm. It catalyses the reaction IMP + L-aspartate + GTP = N(6)-(1,2-dicarboxyethyl)-AMP + GDP + phosphate + 2 H(+). It functions in the pathway purine metabolism; AMP biosynthesis via de novo pathway; AMP from IMP: step 1/2. Plays an important role in the de novo pathway of purine nucleotide biosynthesis. Catalyzes the first committed step in the biosynthesis of AMP from IMP. This is Adenylosuccinate synthetase from Lactobacillus delbrueckii subsp. bulgaricus (strain ATCC 11842 / DSM 20081 / BCRC 10696 / JCM 1002 / NBRC 13953 / NCIMB 11778 / NCTC 12712 / WDCM 00102 / Lb 14).